The sequence spans 926 residues: Disease resistance protein RPM1 (926 aa).

Residues 10-45 (IGRILSVLENETLLLSGVHGEIDKMKKELLIMKSFL) are leucine-zipper. The region spanning 153–467 (DAKWVNNISE…AQRFVEPIRG (315 aa)) is the NB-ARC domain. 200–207 (GMGGSGKT) contacts ATP. 11 LRR repeats span residues 561-580 (LHSL…LPSL), 581-603 (NLLR…LVTM), 605-625 (NLKY…NFHK), 626-649 (LVNL…MWKL), 686-707 (LQVM…CMTQ), 708-731 (LTRI…LNKI), 756-777 (TASI…WFNT), 778-804 (LQNL…TLPR), 825-836 (FQNLKILEIVQM), 837-859 (KHLT…YVRA), and 876-900 (LQEL…SVDR).

This sequence belongs to the disease resistance NB-LRR family. Interacts directly with RIN4 via its N-terminal region. Interacts (via N-terminus) with RIN2 and RIN3 (via C-terminus). Interacts with TIP49A, a protein known to interact with the TATA binding protein complex (TBP). Binds to MORC1/CRT1. Interacts, via its NB-ARC domain, with RIN13.

Its subcellular location is the endomembrane system. It is found in the cell membrane. Its function is as follows. Disease resistance (R) protein that specifically recognizes the AvrRpm1 type III effector avirulence protein from Pseudomonas syringae. Resistance proteins guard the plant against pathogens that contain an appropriate avirulence protein via an indirect interaction with this avirulence protein. That triggers a defense system including the hypersensitive response (HR), which restricts the pathogen growth. Acts via its interaction with RIN4, and probably triggers the plant resistance when RIN4 is phosphorylated by AvrRpm1. It is then degraded at the onset of the hypersensitive response. The chain is Disease resistance protein RPM1 from Arabidopsis thaliana (Mouse-ear cress).